The primary structure comprises 360 residues: MKPSIYGLTRDELIAWAIDNGQKAFRATQIWDWLYRKRIQSFDEMTNISKEFLAILKDSFCINPLKQRVAQESADGTVKYLFELPDGMLIETVLMRQHYGQSVCVTTQVGCNIGCTFCASGLIKKQRDLNSGEITAQIMMVQNYFDQRGQDERVSHVVVMGIGEPFDNYQNVMTFLRTINDDHGLAIGARHITVSTSGLAHKIREFANEGVQVNLAVSLHAPNNELRSSIMRINRSFPLDKLFSAIEYYIETTNRRVTFEYIMLNKVNDGVEQAQELADLTKRIRKLSYVNLIPYNPVSEHDQYSRSPKERVAAFYDILKKNGVNCVVRQEHGTDIDAACGQLRSNTMKKDRQKAAAART.

E91 functions as the Proton acceptor in the catalytic mechanism. Positions 97–335 (QHYGQSVCVT…CVVRQEHGTD (239 aa)) constitute a Radical SAM core domain. C104 and C340 are joined by a disulfide. [4Fe-4S] cluster contacts are provided by C111, C115, and C118. Residues 163 to 164 (GE), S195, 218 to 220 (SLH), and N296 contribute to the S-adenosyl-L-methionine site. C340 functions as the S-methylcysteine intermediate in the catalytic mechanism.

It belongs to the radical SAM superfamily. RlmN family. The cofactor is [4Fe-4S] cluster.

The protein resides in the cytoplasm. It catalyses the reaction adenosine(2503) in 23S rRNA + 2 reduced [2Fe-2S]-[ferredoxin] + 2 S-adenosyl-L-methionine = 2-methyladenosine(2503) in 23S rRNA + 5'-deoxyadenosine + L-methionine + 2 oxidized [2Fe-2S]-[ferredoxin] + S-adenosyl-L-homocysteine. The enzyme catalyses adenosine(37) in tRNA + 2 reduced [2Fe-2S]-[ferredoxin] + 2 S-adenosyl-L-methionine = 2-methyladenosine(37) in tRNA + 5'-deoxyadenosine + L-methionine + 2 oxidized [2Fe-2S]-[ferredoxin] + S-adenosyl-L-homocysteine. Functionally, specifically methylates position 2 of adenine 2503 in 23S rRNA and position 2 of adenine 37 in tRNAs. This is Probable dual-specificity RNA methyltransferase RlmN from Streptococcus equi subsp. zooepidemicus (strain MGCS10565).